We begin with the raw amino-acid sequence, 488 residues long: Metalloreductase STEAP3 (488 aa).

At 1 to 207 the chain is on the cytoplasmic side; the sequence is MSGEMDKPLI…AREVEAIPLR (207 aa). Phosphoserine is present on residues S11, S17, and S20. Residues 36–39, 58–59, 91–98, N116, and A151 contribute to the NADP(+) site; these read SGDF, SR, and VFREHYSS. W152 and D160 together coordinate FAD. Residues 208 to 228 form a helical membrane-spanning segment; the sequence is LLPSWKVPTLLALGLFVCFYA. Residue Y229 participates in Fe(3+) binding. Residues 229–258 lie on the Vesicular side of the membrane; the sequence is YNFIRDVLQPYIRKDENKFYKMPLSVVNTT. N-linked (GlcNAc...) asparagine glycosylation occurs at N256. The chain crosses the membrane as a helical span at residues 259-279; that stretch reads LPCVAYVLLSLVYLPGVLAAA. Residues 259–407 enclose the Ferric oxidoreductase domain; sequence LPCVAYVLLS…LGFVALMLST (149 aa). Residues 280 to 304 lie on the Cytoplasmic side of the membrane; that stretch reads LQLRRGTKYQRFPDWLDHWLQHRKQ. 3 residues coordinate FAD: Q281, R302, and K303. A helical membrane pass occupies residues 305 to 325; it reads IGLLSFFFAMLHALYSFCLPL. Residue H316 participates in heme b binding. A Fe(3+)-binding site is contributed by Y319. Over 326–358 the chain is Vesicular; that stretch reads RRSHRYDLVNLAVKQVLANKSRLWVEEEVWRME. Residues 359 to 379 traverse the membrane as a helical segment; sequence IYLSLGVLALGMLSLLAVTSI. S378 is a binding site for FAD. Residues 380–390 are Cytoplasmic-facing; that stretch reads PSIANSLNWKE. The chain crosses the membrane as a helical span at residues 391–411; sequence FSFVQSTLGFVALMLSTMHTL. Q395 provides a ligand contact to FAD. Residue H409 coordinates heme b. At 412–433 the chain is on the vesicular side; the sequence is TYGWTRAFEENHYKFYLPPTFT. Residues 434 to 454 traverse the membrane as a helical segment; sequence LTLLLPCVIILAKGLFLLPCL. Residues 455-488 are Cytoplasmic-facing; the sequence is SHRLTKIRRGWERDGAVKFMLPAGHTQGEKTSHV. S486 carries the post-translational modification Phosphoserine.

It belongs to the STEAP family. Homodimer. Interacts with BNIP3L, MYT1, RHBDL4/RHBDD1 and TCTP. FAD is required as a cofactor. Requires heme b as cofactor. In terms of processing, proteolytically cleaved by RHBDL4/RHBDD1. RHBDL4/RHBDD1-induced cleavage occurs at multiple sites in a glycosylation-independent manner. Post-translationally, glycosylated.

It localises to the endosome membrane. The catalysed reaction is 2 Fe(2+) + NADP(+) + H(+) = 2 Fe(3+) + NADPH. The enzyme catalyses 2 Cu(+) + NADP(+) + H(+) = 2 Cu(2+) + NADPH. Functionally, integral membrane protein that functions as a NADPH-dependent ferric-chelate reductase, using NADPH from one side of the membrane to reduce a Fe(3+) chelate that is bound on the other side of the membrane. Mediates sequential transmembrane electron transfer from NADPH to FAD and onto heme, and finally to the Fe(3+) chelate. Can also reduce Cu(2+) to Cu(1+). Mediates efficient transferrin-dependent iron uptake in erythroid cells. May play a role downstream of p53/TP53 to interface apoptosis and cell cycle progression. Indirectly involved in exosome secretion by facilitating the secretion of proteins such as TCTP. The polypeptide is Metalloreductase STEAP3 (Steap3) (Rattus norvegicus (Rat)).